The following is a 1247-amino-acid chain: Structural polyprotein (1247 aa).

A host transcription inhibition region spans residues 36–67; the sequence is RPAGQLAQLISAVSRLALRTVPQKPRRTRKIK. The tract at residues 54 to 103 is disordered; it reads RTVPQKPRRTRKIKKQKQVKQEQQSTTNQKKKAPKQKQTQKKKRPGRRER. 2 stretches are compositionally biased toward basic residues: residues 59–71 and 82–100; these read KPRR…KQKQ and QKKK…RPGR. Residues 60 to 98 carry the Nuclear localization signal motif; it reads PRRTRKIKKQKQVKQEQQSTTNQKKKAPKQKQTQKKKRP. The tract at residues 83-113 is binding to the viral RNA; it reads KKKAPKQKQTQKKKRPGRRERMCMKIENDCI. The interval 98 to 112 is ribosome-binding; it reads PGRRERMCMKIENDC. An intrachain disulfide couples Cys-112 to Cys-127. In terms of domain architecture, Peptidase S3 spans 112–260; the sequence is CIFEVRHEGK…KITPEGSVEW (149 aa). His-138 functions as the Charge relay system in the catalytic mechanism. The Nuclear export signal signature appears at 143-153; that stretch reads IDNADLAKLAF. The segment at 154–159 is interaction with spike glycoprotein E2; the sequence is KRSSKY. The Charge relay system role is filled by Asp-160. Positions 182–192 are dimerization of the capsid protein; that stretch reads PEGYYNWHHGA. The active-site Charge relay system is Ser-212. The interval 218-222 is dimerization of the capsid protein; it reads DNKGR. The segment at 261–273 is functions as an uncleaved signal peptide for the precursor of protein E3/E2; that stretch reads SLALPVMCLLANT. Intrachain disulfides connect Cys-268–Cys-277, Cys-282–Cys-286, Cys-285–Cys-317, Cys-343–Cys-449, Cys-346–Cys-352, Cys-415–Cys-429, Cys-477–Cys-590, Cys-525–Cys-549, and Cys-527–Cys-544. Asn-272 carries an N-linked (GlcNAc...) asparagine; by host glycan. N-linked (GlcNAc...) asparagine; by host glycans are attached at residues Asn-587 and Asn-669. Residues 692 to 712 traverse the membrane as a helical segment; the sequence is IAVLAAASIVITSLVGLSLGM. Residues 715-719 are interaction with the capsid protein; sequence CARRR. 3 S-palmitoyl cysteine; by host lipidation sites follow: Cys-720, Cys-740, and Cys-741. A helical transmembrane segment spans residues 720 to 740; it reads CITPYELTPGATIPFLLGVLC. The segment at 720 to 740 is transient transmembrane before p62-6K protein processing; that stretch reads CITPYELTPGATIPFLLGVLC. Cys-720 and Cys-741 are oxidised to a cystine. A helical membrane pass occupies residues 763-783; sequence PLFWLQLLIPLSAAIVVCNCL. Disulfide bonds link Cys-857/Cys-922, Cys-870/Cys-902, Cys-871/Cys-904, and Cys-876/Cys-886. The tract at residues 892–909 is E1 fusion peptide loop; that stretch reads VYPFMWGGAYCFCDAENT. N-linked (GlcNAc...) asparagine; by host glycans are attached at residues Asn-949 and Asn-1078. 4 disulfides stabilise this stretch: Cys-1067–Cys-1079, Cys-1109–Cys-1184, Cys-1114–Cys-1188, and Cys-1136–Cys-1178. Residues 1224–1244 traverse the membrane as a helical segment; it reads GVGLVVAIAALILIIVLCVSF. The S-palmitoyl cysteine; by host moiety is linked to residue Cys-1241. The S-stearoyl cysteine; by host moiety is linked to residue Cys-1241.

As to quaternary structure, homodimer. Homomultimer. Interacts with host karyopherin KPNA4; this interaction allows the nuclear import of the viral capsid protein. Interacts with spike glycoprotein E2. Interacts with host IRAK1; the interaction leads to inhibition of IRAK1-dependent signaling. In terms of assembly, the precursor of protein E3/E2 and E1 form a heterodimer shortly after synthesis. The precursor of protein E3/E2 and E1 form a heterodimer shortly after synthesis. Processing of the precursor of protein E3/E2 into E2 and E3 results in a heterodimer of the spike glycoproteins E2 and E1. Spike at virion surface are constituted of three E2-E1 heterodimers. After target cell attachment and endocytosis, E1 change conformation to form homotrimers. Interacts with 6K protein. As to quaternary structure, interacts with spike glycoprotein E1. Processing of the precursor of protein E3/E2 into E2 and E3 results in a heterodimer of the spike glycoproteins E2 and E1. Spike at virion surface are constituted of a trimer of E2-E1 heterodimers. Interacts with 6K protein. Interacts with host MXRA8; this interaction mediates virus entry. In terms of assembly, oligomer. Interacts with spike glycoprotein E1. Interacts with spike glycoprotein E2. In terms of processing, structural polyprotein: Specific enzymatic cleavages in vivo yield mature proteins. Capsid protein is auto-cleaved during polyprotein translation, unmasking a signal peptide at the N-terminus of the precursor of E3/E2. The remaining polyprotein is then targeted to the host endoplasmic reticulum, where host signal peptidase cleaves it into pE2, 6K and E1 proteins. pE2 is further processed to mature E3 and E2 by host furin in trans-Golgi vesicle. Palmitoylated via thioester bonds. These palmitoylations may induce disruption of the C-terminus transmembrane. This would result in the reorientation of E2 C-terminus from lumenal to cytoplasmic side. Post-translationally, N-glycosylated. In terms of processing, palmitoylated via thioester bonds.

Its subcellular location is the virion. The protein resides in the host cytoplasm. It localises to the host cell membrane. It is found in the host nucleus. The protein localises to the virion membrane. Its subcellular location is the host Golgi apparatus. The protein resides in the host trans-Golgi network. It localises to the host endoplasmic reticulum. The enzyme catalyses Autocatalytic release of the core protein from the N-terminus of the togavirus structural polyprotein by hydrolysis of a -Trp-|-Ser- bond.. Its function is as follows. Forms an icosahedral capsid with a T=4 symmetry composed of 240 copies of the capsid protein surrounded by a lipid membrane through which penetrate 80 spikes composed of trimers of E1-E2 heterodimers. The capsid protein binds to the viral RNA genome at a site adjacent to a ribosome binding site for viral genome translation following genome release. Possesses a protease activity that results in its autocatalytic cleavage from the nascent structural protein. Following its self-cleavage, the capsid protein transiently associates with ribosomes, and within several minutes the protein binds to viral RNA and rapidly assembles into icosahedric core particles. The resulting nucleocapsid eventually associates with the cytoplasmic domain of the spike glycoprotein E2 at the cell membrane, leading to budding and formation of mature virions. In case of infection, new virions attach to target cells and after clathrin-mediated endocytosis their membrane fuses with the host endosomal membrane. This leads to the release of the nucleocapsid into the cytoplasm, followed by an uncoating event necessary for the genomic RNA to become accessible. The uncoating might be triggered by the interaction of capsid proteins with ribosomes. Binding of ribosomes would release the genomic RNA since the same region is genomic RNA-binding and ribosome-binding. Specifically inhibits interleukin-1 receptor-associated kinase 1/IRAK1-dependent signaling during viral entry, representing a means by which the alphaviruses may evade innate immune detection and activation prior to viral gene expression. In terms of biological role, provides the signal sequence for the translocation of the precursor of protein E3/E2 to the host endoplasmic reticulum. Furin-cleaved E3 remains associated with spike glycoprotein E1 and mediates pH protection of the latter during the transport via the secretory pathway. After virion release from the host cell, the assembly protein E3 is gradually released in the extracellular space. Functionally, plays a role in viral attachment to target host cell, by binding to the cell receptor MXRA8. Synthesized as a p62 precursor which is processed by furin at the cell membrane just before virion budding, giving rise to E2-E1 heterodimer. The p62-E1 heterodimer is stable, whereas E2-E1 is unstable and dissociate at low pH. p62 is processed at the last step, presumably to avoid E1 fusion activation before its final export to cell surface. E2 C-terminus contains a transitory transmembrane that would be disrupted by palmitoylation, resulting in reorientation of the C-terminal tail from lumenal to cytoplasmic side. This step is critical since E2 C-terminus is involved in budding by interacting with capsid proteins. This release of E2 C-terminus in cytoplasm occurs lately in protein export, and precludes premature assembly of particles at the endoplasmic reticulum membrane. Acts as a viroporin that participates in virus glycoprotein processing and transport to the plasma membrane, cell permeabilization and budding of viral particles. Disrupts the calcium homeostasis of the cell, probably at the endoplasmic reticulum level. This leads to cytoplasmic calcium elevation. Because of its lipophilic properties, the 6K protein is postulated to influence the selection of lipids that interact with the transmembrane domains of the glycoproteins, which, in turn, affects the deformability of the bilayer required for the extreme curvature that occurs as budding proceeds. Present in low amount in virions, about 3% compared to viral glycoproteins. Its function is as follows. Class II viral fusion protein. Fusion activity is inactive as long as E1 is bound to E2 in mature virion. After virus attachment to target cell via host MXRA8 and endocytosis, acidification of the endosome induce dissociation of E1/E2 heterodimer and concomitant trimerization of the E1 subunits. This E1 trimer is fusion active, and promotes release of viral nucleocapsid in cytoplasm after endosome and viral membrane fusion. Efficient fusion requires the presence of cholesterol and sphingolipid in the target membrane. This O'nyong-nyong virus (strain Gulu) (ONNV) protein is Structural polyprotein.